The sequence spans 107 residues: Monogrin 2 (107 aa).

Residues 1 to 20 form the signal peptide; it reads MEGKVLLCFALLLPFTVAQA. 3 disulfides stabilise this stretch: cysteine 28-cysteine 82, cysteine 36-cysteine 62, and cysteine 55-cysteine 78. In terms of domain architecture, BPTI/Kunitz inhibitor spans 29 to 82; sequence GYLMMQRCRGDTTETKAWGFNYEEKKCQKETVICGTGGAPRNAFETKKDCDALC. Residues 37 to 39 carry the Cell attachment site motif; it reads RGD.

Post-translationally, the N-terminus is blocked. In terms of tissue distribution, expressed in salivary glands.

The protein resides in the cytoplasmic vesicle. It is found in the secretory vesicle. It localises to the secreted. In terms of biological role, tick salivary platelet aggregation inhibitor that plays an important part in the anti-hemostatic strategy of ticks. Inhibits platelet aggregation induced by ADP (IC(50)~150 nM), collagen, and platelet activating factor (PAF). Acts by binding to platelet membrane glycoprotein IIb-IIIa (ITGA2B/ITGB3) in a metal ion dependent manner. Does not inhibit aggregation induced by ristocecin, an agonist that aggregates platelets independently from the glycoprotein IIb-IIIa (ITGA2B/ITGB3). In contrast to other tick platelet aggregation inhibitors, this protein does not protect ITGA2B/ITGB3 from dissociation under SDS condition, suggesting it may dissocate much faster than its orthologs. This is Monogrin 2 from Argas monolakensis (Mono lake bird tick).